Here is a 407-residue protein sequence, read N- to C-terminus: CCCH-type zinc finger protein oma-1 (407 aa).

The segment at 1 to 39 (MNVNGENNEKIDEHHLESSLAGVPTLPVSPLDHAKDLSQ) is disordered. The span at 7 to 17 (NNEKIDEHHLE) shows a compositional bias: basic and acidic residues. A required for taf-4 binding region spans residues 46–80 (IGDLVTQTANLIAIKKQLLEDIAFNQHIQSMQVRA). C3H1-type zinc fingers lie at residues 112 to 140 (SYKT…HGEE) and 154 to 182 (KYKT…HPDH). Thr-239 bears the Phosphothreonine; by mbk-2 and GSK3 mark. A Phosphoserine; by mbk-2 modification is found at Ser-302. A Phosphothreonine; by GSK3 modification is found at Thr-339.

In terms of assembly, interacts with taf-4 (via C-terminus). Interacts with ifet-1. Component of a ribonucleoprotein particle complex that interacts with cgh-1 and car-1 in an RNA-dependent manner. Association with many proteins is dependent on the presence of RNA. In terms of processing, phosphorylation by mbk-2 and by gsk-3 are required for its rapid degradation following meiosis II. In terms of tissue distribution, exclusively expressed in the hermaphrodite gonad. Expressed prior to oocyte division. Widely distributed throughout gonadal oocytes from the mitotic stage to the developing diakinesis stage. Expressed in sperm.

The protein localises to the cytoplasm. The protein resides in the cytoplasmic granule. Its subcellular location is the nucleus. Its function is as follows. Zinc-finger RNA-binding protein that binds to 5'-UA[AU]-3' motifs in the 3'-UTR of maternal mRNAs to suppress translation in oocytes and embryos. Acts as a ribonucleoprotein particle component that may exert part of its function within cytoplasmic foci of unfertilized oocytes. Acts redundantly with oma-2 to control the temporal expression and distribution of maternal proteins and thereby promote meiotic progression, oocyte maturation, fertilization and embryonic development. Recruits the translational repressor ifet-1 to the 3'-UTR of mei-1 and zif-1 to negatively regulate their translation. By suppressing the translation of the E3 ligase zif-1, may in turn play a role in the stabilization of zif-1 targets such as the maternal transcriptional repressor protein pie-1. Following fertilization, sequesters the transcription initiation factor, taf-4, in the cytoplasm, which prevents its nuclear localization and thus allows for transcriptional suppression in early embryos, but not in oocytes. Also, together with oma-2, is involved in P-granule distribution during embryonic development. In Caenorhabditis elegans, this protein is CCCH-type zinc finger protein oma-1.